Reading from the N-terminus, the 385-residue chain is Taurine hydroxylase-like protein SAT17 (385 aa).

The protein operates within mycotoxin biosynthesis. Functionally, taurine hydroxylase-like protein; part of the satratoxin SC3 cluster involved in the biosynthesis of satratoxins, trichothecene mycotoxins that are associated with human food poisonings. Satratoxins are suggested to be made by products of multiple gene clusters (SC1, SC2 and SC3) that encode 21 proteins in all, including polyketide synthases, acetyltransferases, and other enzymes expected to modify the trichothecene skeleton. SC1 encodes 10 proteins, SAT1 to SAT10. The largest are SAT8, which encodes a putative polyketide synthase (PKS) with a conventional non-reducing architecture, and SAT10, a putative protein containing four ankyrin repeats and thus may be involved in protein scaffolding. The putative short-chain reductase SAT3 may assist the PKS in some capacity. SAT6 contains a secretory lipase domain and acts probably as a trichothecene esterase. SAT5 encodes a putative acetyltransferase, and so, with SAT6, may affect endogenous protection from toxicity. The probable transcription factor SAT9 may regulate the expression of the SC1 cluster. SC2 encodes proteins SAT11 to SAT16, the largest of which encodes the putative reducing PKS SAT13. SAT11 is a cytochrome P450 monooxygenase, while SAT14 and SAT16 are probable acetyltransferases. The SC2 cluster may be regulated by the transcription factor SAT15. SC3 is a small cluster that encodes 5 proteins, SAT17 to SAT21. SAT21 is a putative MFS-type transporter which may have a role in exporting secondary metabolites. The four other proteins putatively encoded in SC3 include the taurine hydroxylase-like protein SAT17, the O-methyltransferase SAT18, the acetyltransferase SAT19, and the Cys6-type zinc finger SAT20, the latter being probably involved in regulation of SC3 expression. The sequence is that of Taurine hydroxylase-like protein SAT17 from Stachybotrys chartarum (strain CBS 109288 / IBT 7711) (Toxic black mold).